The following is a 459-amino-acid chain: Xylose/arabinose-binding protein XacG (459 aa).

The chain crosses the membrane as a helical span at residues 19–36; the sequence is ALTVGAAAGIAGCTGGGG. Residues 27–68 are disordered; it reads GIAGCTGGGGTETESTESGNGNGSGGSTDDTETSGSSSGESW.

It belongs to the bacterial solute-binding protein 1 family. The complex is composed of two ATP-binding proteins (XacJ and XacK), two transmembrane proteins (XacH and XacI) and a solute-binding protein (XacG).

It is found in the cell membrane. Part of the ABC transporter complex XacGHIJK involved in the uptake of xylose and arabinose. This is Xylose/arabinose-binding protein XacG from Haloferax volcanii (strain ATCC 29605 / DSM 3757 / JCM 8879 / NBRC 14742 / NCIMB 2012 / VKM B-1768 / DS2) (Halobacterium volcanii).